The chain runs to 277 residues: Myelin proteolipid protein (277 aa).

The Cytoplasmic portion of the chain corresponds to 1–10; sequence MGLLECCARC. S-palmitoyl cysteine attachment occurs at residues Cys-6, Cys-7, and Cys-10. The chain crosses the membrane as a helical span at residues 11–36; sequence LVGAPFASLVATGLCFFGVALFCGCG. Over 37 to 59 the chain is Extracellular; it reads HEALTGTEKLIETYFSKNYQDYE. A helical transmembrane segment spans residues 60 to 88; sequence YLINVIHAFQYVIYGTASFFFLYGALLLA. At 89 to 151 the chain is on the cytoplasmic side; that stretch reads EGFYTTGAVR…LGKWLGHPDK (63 aa). Cys-109 is lipidated: S-palmitoyl cysteine. Phosphoserine is present on Ser-114. Phosphothreonine occurs at positions 116 and 118. 2 S-palmitoyl cysteine lipidation sites follow: Cys-139 and Cys-141. Residues 152-178 traverse the membrane as a helical segment; sequence FVGITYALTIVWLLVFACSAVPVYIYF. Over 179-238 the chain is Extracellular; the sequence is NTWTTCQSIAFPSKTSASIGSLCADARMYGVLPWNAFPGKVCGSNLLSICKTAEFQMTFH. 2 disulfides stabilise this stretch: Cys-184–Cys-228 and Cys-201–Cys-220. A lipid anchor (O-palmitoyl serine) is attached at Ser-199. A helical membrane pass occupies residues 239 to 268; that stretch reads LFIAAFVGAAATLVSLLTFMIAATYNFAVL. The Cytoplasmic segment spans residues 269–277; sequence KLMGRGTKF.

Belongs to the myelin proteolipid protein family.

It is found in the cell membrane. The protein localises to the myelin membrane. In terms of biological role, this is the major myelin protein from the central nervous system. It plays an important role in the formation or maintenance of the multilamellar structure of myelin. The protein is Myelin proteolipid protein (PLP1) of Canis lupus familiaris (Dog).